The primary structure comprises 319 residues: MTVLAWCIAWLLDFVIGDPQNWPHPVRWIGNLISATQRVVRRYCHSDRSLRIGGAVMWLVVVGVTWAVSWGVLALASEIHPWFGWLVEIWMIFTVLAGRCLANAARDVERPLRAGDLAESREKLSWIVGRDTSQLQPEQVNRAVVETVAENTVDGIIAPLFFLFLGGAPLAMAYKAVNTLDSMVGYKHEKYRAIGMVSARLDDIANVIPARLSWLLLSIAAALCRYDGYRALHIGWRDRYNHSSPNCAWSEASVAGALGIRLGGPNDYFGERVEKPWIGDAQRGISVDDISRTIRLMWVASTLALALFIAVRCLLVGAA.

Helical transmembrane passes span 55 to 75, 78 to 98, 153 to 173, and 296 to 316; these read AVMW…VLAL, EIHP…VLAG, VDGI…LAMA, and LMWV…CLLV.

Belongs to the CobD/CbiB family.

The protein resides in the cell membrane. It functions in the pathway cofactor biosynthesis; adenosylcobalamin biosynthesis. Its function is as follows. Converts cobyric acid to cobinamide by the addition of aminopropanol on the F carboxylic group. The sequence is that of Cobalamin biosynthesis protein CobD from Citrobacter koseri (strain ATCC BAA-895 / CDC 4225-83 / SGSC4696).